Consider the following 554-residue polypeptide: NADH-quinone oxidoreductase subunit N 3 (554 aa).

14 helical membrane passes run 35-55, 65-85, 105-125, 161-181, 187-207, 222-242, 275-295, 322-342, 345-365, 371-391, 398-418, 442-462, 476-496, and 525-545; these read LMPV…EAFV, LFLT…LAAG, PTLF…FTFA, GFTT…LLVF, LLTL…LCAV, YFLL…LLYG, ALLL…VGAV, VAAF…LAWD, PVMW…AITQ, LLAY…IAAS, VLFY…VVTL, VAAV…TSGF, GAGA…FFYI, and IAVG…FLDL.

The protein belongs to the complex I subunit 2 family. NDH-1 is composed of 14 different subunits. Subunits NuoA, H, J, K, L, M, N constitute the membrane sector of the complex.

It is found in the cell membrane. It carries out the reaction a quinone + NADH + 5 H(+)(in) = a quinol + NAD(+) + 4 H(+)(out). Its function is as follows. NDH-1 shuttles electrons from NADH, via FMN and iron-sulfur (Fe-S) centers, to quinones in the respiratory chain. The immediate electron acceptor for the enzyme in this species is believed to be a menaquinone. Couples the redox reaction to proton translocation (for every two electrons transferred, four hydrogen ions are translocated across the cytoplasmic membrane), and thus conserves the redox energy in a proton gradient. This Streptomyces griseus subsp. griseus (strain JCM 4626 / CBS 651.72 / NBRC 13350 / KCC S-0626 / ISP 5235) protein is NADH-quinone oxidoreductase subunit N 3.